A 104-amino-acid polypeptide reads, in one-letter code: Large ribosomal subunit protein bL21 (104 aa).

Belongs to the bacterial ribosomal protein bL21 family. In terms of assembly, part of the 50S ribosomal subunit. Contacts protein L20.

In terms of biological role, this protein binds to 23S rRNA in the presence of protein L20. This chain is Large ribosomal subunit protein bL21, found in Tropheryma whipplei (strain TW08/27) (Whipple's bacillus).